Reading from the N-terminus, the 94-residue chain is HssA/B-like protein 51 (94 aa).

A disordered region spans residues 1 to 25 (MTLFSSISSISNPMTNSKSRISSFG).

It belongs to the hssA/B family.

In Dictyostelium discoideum (Social amoeba), this protein is HssA/B-like protein 51 (hssl51).